The chain runs to 183 residues: ATP-dependent protease subunit HslV (183 aa).

The active site involves Thr-13. Residues Gly-168, Cys-171, and Thr-174 each contribute to the Na(+) site.

This sequence belongs to the peptidase T1B family. HslV subfamily. A double ring-shaped homohexamer of HslV is capped on each side by a ring-shaped HslU homohexamer. The assembly of the HslU/HslV complex is dependent on binding of ATP.

It is found in the cytoplasm. It carries out the reaction ATP-dependent cleavage of peptide bonds with broad specificity.. Allosterically activated by HslU binding. In terms of biological role, protease subunit of a proteasome-like degradation complex believed to be a general protein degrading machinery. The sequence is that of ATP-dependent protease subunit HslV from Xylella fastidiosa (strain M23).